Here is a 237-residue protein sequence, read N- to C-terminus: ATP synthase subunit a (237 aa).

5 helical membrane passes run 17 to 37 (LSDMLMITITSLIVFIIAVAA), 75 to 95 (FLTLGVTLIMYVFVANMLGLP), 112 to 132 (DATVTLTLAVMVVGLTHYYGV), 179 to 201 (ILLGLLASLGTHYGVLGAVGAAI), and 214 to 234 (GTIQAFIFTMLTMVYMAHKVS).

This sequence belongs to the ATPase A chain family. In terms of assembly, F-type ATPases have 2 components, CF(1) - the catalytic core - and CF(0) - the membrane proton channel. CF(1) has five subunits: alpha(3), beta(3), gamma(1), delta(1), epsilon(1). CF(0) has three main subunits: a(1), b(2) and c(9-12). The alpha and beta chains form an alternating ring which encloses part of the gamma chain. CF(1) is attached to CF(0) by a central stalk formed by the gamma and epsilon chains, while a peripheral stalk is formed by the delta and b chains.

Its subcellular location is the cell membrane. Key component of the proton channel; it plays a direct role in the translocation of protons across the membrane. The chain is ATP synthase subunit a from Geobacillus kaustophilus (strain HTA426).